Consider the following 473-residue polypeptide: Protein AUXIN RESPONSE 4 (473 aa).

The segment covering 1–10 (MAIITEEEED) has biased composition (acidic residues). The segment at 1–38 (MAIITEEEEDPKTLNPPKNKPKDSDFTKSESTMKNPKP) is disordered. Positions 29–38 (SESTMKNPKP) are enriched in polar residues. A helical membrane pass occupies residues 44–64 (FPFWFYFTVVVSLATIIFISL). The AB hydrolase-1 domain occupies 119–283 (TVVIVHGLGL…DSSISPALPL (165 aa)).

As to expression, most abundant in root tissue, lesser amounts in rosette leaves, stems and flowers and very little in mature siliques.

Its subcellular location is the endoplasmic reticulum membrane. In terms of biological role, required for the auxin influx facilitator AUX1 polar trafficking and its asymmetric localization within the plasma membrane. Not involved in the PIN proteins localization. This is Protein AUXIN RESPONSE 4 (AXR4) from Arabidopsis thaliana (Mouse-ear cress).